Consider the following 266-residue polypeptide: MRYLLTNDDGIYARGLSALYSELSKDADCLIVAPEVERSAVGHAITLNRPLMVRRTKKDGNFLGYAVSGTPADCVKIGIKELSEKPVDLVVSGINIGANVGINVIYSGTVSAATEGAILGVPSMAISLGTLRNADYTFAAHFARTMARFIMKYFEKKSVALNINVPALPVQDIKGYAVTRQGKARLIESFDRRVDPRERLYYWLAGETQLSEQEEPDSDGSALSRGMISITPIYHDMTRYDALDGLKALLSKETSLLPVAKCDFQD.

4 residues coordinate a divalent metal cation: aspartate 8, aspartate 9, serine 39, and asparagine 95.

The protein belongs to the SurE nucleotidase family. A divalent metal cation is required as a cofactor.

The protein localises to the cytoplasm. The catalysed reaction is a ribonucleoside 5'-phosphate + H2O = a ribonucleoside + phosphate. Functionally, nucleotidase that shows phosphatase activity on nucleoside 5'-monophosphates. The polypeptide is 5'-nucleotidase SurE (Syntrophus aciditrophicus (strain SB)).